Consider the following 109-residue polypeptide: Cell division protein ZapA (109 aa).

Residues 21–99 are a coiled coil; sequence PEQRDALNQA…IEQALLEQGR (79 aa).

Belongs to the ZapA family. Type 1 subfamily. As to quaternary structure, homodimer. Interacts with FtsZ.

Its subcellular location is the cytoplasm. Functionally, activator of cell division through the inhibition of FtsZ GTPase activity, therefore promoting FtsZ assembly into bundles of protofilaments necessary for the formation of the division Z ring. It is recruited early at mid-cell but it is not essential for cell division. This is Cell division protein ZapA from Klebsiella pneumoniae (strain 342).